We begin with the raw amino-acid sequence, 511 residues long: Putative polyol transporter 2 (511 aa).

12 helical membrane-spanning segments follow: residues 25 to 45, 63 to 83, 94 to 114, 117 to 137, 156 to 176, 186 to 206, 284 to 304, 324 to 344, 351 to 371, 384 to 404, 424 to 444, and 454 to 474; these read FAFA…YDIG, VQLE…SGAA, YTIV…GFAT, PFIM…MMIA, FPEI…YFFA, FMLG…LAMP, ILIA…DAVV, LATV…TCLV, ALLL…GTSL, WAIG…SLGA, GASL…MTFL, and GAFL…FTFL.

The protein belongs to the major facilitator superfamily. Sugar transporter (TC 2.A.1.1) family.

Its subcellular location is the membrane. Plasma membrane sugar-proton symporter. This chain is Putative polyol transporter 2 (PLT2), found in Arabidopsis thaliana (Mouse-ear cress).